Here is an 85-residue protein sequence, read N- to C-terminus: Exodeoxyribonuclease 7 small subunit (85 aa).

Residues 66–85 (SGEGEEVPLDTPDAEDGDGE) are disordered. Acidic residues predominate over residues 68–85 (EGEEVPLDTPDAEDGDGE).

The protein belongs to the XseB family. Heterooligomer composed of large and small subunits.

Its subcellular location is the cytoplasm. It catalyses the reaction Exonucleolytic cleavage in either 5'- to 3'- or 3'- to 5'-direction to yield nucleoside 5'-phosphates.. In terms of biological role, bidirectionally degrades single-stranded DNA into large acid-insoluble oligonucleotides, which are then degraded further into small acid-soluble oligonucleotides. This is Exodeoxyribonuclease 7 small subunit from Thioalkalivibrio sulfidiphilus (strain HL-EbGR7).